A 98-amino-acid polypeptide reads, in one-letter code: NADH-ubiquinone oxidoreductase chain 4L (98 aa).

The next 2 helical transmembrane spans lie at 26–46 (LVASLLCLEGMMMSLFIMATL) and 61–81 (IILLVFAACEAAVGLALLISI).

It belongs to the complex I subunit 4L family. As to quaternary structure, core subunit of respiratory chain NADH dehydrogenase (Complex I) which is composed of 45 different subunits.

The protein resides in the mitochondrion inner membrane. The catalysed reaction is a ubiquinone + NADH + 5 H(+)(in) = a ubiquinol + NAD(+) + 4 H(+)(out). Its function is as follows. Core subunit of the mitochondrial membrane respiratory chain NADH dehydrogenase (Complex I) which catalyzes electron transfer from NADH through the respiratory chain, using ubiquinone as an electron acceptor. Part of the enzyme membrane arm which is embedded in the lipid bilayer and involved in proton translocation. This chain is NADH-ubiquinone oxidoreductase chain 4L (MT-ND4L), found in Macaca nigrescens (Gorontalo macaque).